The primary structure comprises 331 residues: Biotin synthase (331 aa).

Positions 52–277 constitute a Radical SAM core domain; the sequence is PDVEVEGIIS…RTMLRFAGGR (226 aa). [4Fe-4S] cluster is bound by residues C67, C71, and C74. Residues C110, C143, C202, and R272 each coordinate [2Fe-2S] cluster.

This sequence belongs to the radical SAM superfamily. Biotin synthase family. In terms of assembly, homodimer. [4Fe-4S] cluster is required as a cofactor. It depends on [2Fe-2S] cluster as a cofactor.

It catalyses the reaction (4R,5S)-dethiobiotin + (sulfur carrier)-SH + 2 reduced [2Fe-2S]-[ferredoxin] + 2 S-adenosyl-L-methionine = (sulfur carrier)-H + biotin + 2 5'-deoxyadenosine + 2 L-methionine + 2 oxidized [2Fe-2S]-[ferredoxin]. The protein operates within cofactor biosynthesis; biotin biosynthesis; biotin from 7,8-diaminononanoate: step 2/2. Functionally, catalyzes the conversion of dethiobiotin (DTB) to biotin by the insertion of a sulfur atom into dethiobiotin via a radical-based mechanism. This chain is Biotin synthase, found in Mycobacterium sp. (strain JLS).